The primary structure comprises 67 residues: Large ribosomal subunit protein uL29 (67 aa).

The protein belongs to the universal ribosomal protein uL29 family. As to quaternary structure, part of the 50S ribosomal subunit. Contacts protein L23 and trigger factor when it is complexed with the ribosome.

Its function is as follows. Binds the 23S rRNA. One of the proteins that surrounds the polypeptide exit tunnel on the outside of the subunit. The polypeptide is Large ribosomal subunit protein uL29 (rpmC) (Deinococcus radiodurans (strain ATCC 13939 / DSM 20539 / JCM 16871 / CCUG 27074 / LMG 4051 / NBRC 15346 / NCIMB 9279 / VKM B-1422 / R1)).